The following is an 88-amino-acid chain: Putative regulatory protein Npun_R3866 (88 aa).

This sequence belongs to the RemA family.

The protein is Putative regulatory protein Npun_R3866 of Nostoc punctiforme (strain ATCC 29133 / PCC 73102).